Here is a 106-residue protein sequence, read N- to C-terminus: Toxin-like structure LSTX-D3 (106 aa).

The N-terminal stretch at 1-20 (MMKVLVVVALLVTLISYSSS) is a signal peptide. A propeptide spanning residues 21–41 (EGIDDLEADELLSLMANEQTR) is cleaved from the precursor. 4 cysteine pairs are disulfide-bonded: Cys-45–Cys-60, Cys-52–Cys-69, Cys-59–Cys-85, and Cys-71–Cys-83.

The protein belongs to the neurotoxin 19 (CSTX) family. 02 (D7) subfamily. Expressed by the venom gland.

The protein resides in the secreted. This chain is Toxin-like structure LSTX-D3, found in Lycosa singoriensis (Wolf spider).